The sequence spans 105 residues: Cuticle protein AMP1A (105 aa).

The segment at 1–21 is disordered; the sequence is DRDAQTLTDERSDQGDGNFRY. The Chitin-binding type R&amp;R domain maps to 16–81; the sequence is DGNFRYEFET…PSSDLLPVGP (66 aa).

Arthrodial membrane.

In Homarus americanus (American lobster), this protein is Cuticle protein AMP1A.